Consider the following 94-residue polypeptide: Scorpine-like-1 (94 aa).

The signal sequence occupies residues 1–18 (MNTKFTVLIFLGVIVVSY). The region spanning 54-94 (EYGCMMDISWNKDCQRHCQSTEQKDGICHGMKCKCGKPRSY) is the BetaSPN-type CS-alpha/beta domain. 3 disulfide bridges follow: Cys57–Cys81, Cys67–Cys86, and Cys71–Cys88.

The protein belongs to the long chain scorpion toxin family. Class 3 subfamily. Expressed by the venom gland.

It localises to the secreted. In terms of biological role, has antibacterial activity. The protein is Scorpine-like-1 of Urodacus yaschenkoi (Inland robust scorpion).